The chain runs to 875 residues: Valine--tRNA ligase (875 aa).

The 'HIGH' region motif lies at 41 to 51 (PNVTGSLHMGH). The 'KMSKS' region motif lies at 525-529 (KMSKS). Residue Lys528 participates in ATP binding. Residues 810–875 (VDLELIKKNL…ERISITIKGL (66 aa)) adopt a coiled-coil conformation.

The protein belongs to the class-I aminoacyl-tRNA synthetase family. ValS type 1 subfamily. As to quaternary structure, monomer.

It is found in the cytoplasm. It carries out the reaction tRNA(Val) + L-valine + ATP = L-valyl-tRNA(Val) + AMP + diphosphate. Catalyzes the attachment of valine to tRNA(Val). As ValRS can inadvertently accommodate and process structurally similar amino acids such as threonine, to avoid such errors, it has a 'posttransfer' editing activity that hydrolyzes mischarged Thr-tRNA(Val) in a tRNA-dependent manner. The chain is Valine--tRNA ligase from Pelagibacter ubique (strain HTCC1062).